Reading from the N-terminus, the 72-residue chain is Conotoxin VnMKLT2-011 (72 aa).

A signal peptide spans 1 to 23 (MMKLTCVLIIAVLFLTACQLTTA). Positions 24-42 (ETRDEYRAVRSSDEVRNSR) are excised as a propeptide. 3 disulfide bridges follow: Cys44-Cys57, Cys51-Cys62, and Cys56-Cys71.

This sequence belongs to the conotoxin O1 superfamily. Expressed by the venom duct.

Its subcellular location is the secreted. The sequence is that of Conotoxin VnMKLT2-011 from Conus ventricosus (Mediterranean cone).